Consider the following 919-residue polypeptide: Aminodeoxychorismate synthase, chloroplastic (919 aa).

Residues 1-45 (MNMNFSFCSTSSELSYPSENVLRFSVASRLFSPKWKKSFISLPCR) constitute a chloroplast transit peptide. Positions 86-342 (RTLLIDNYDS…KDITVNYWSR (257 aa)) constitute a Glutamine amidotransferase type-1 domain. Cys172 (nucleophile) is an active-site residue. Catalysis depends on residues His316 and Glu318. The tract at residues 436-910 (IFMELFGKNR…KTRAPANAVM (475 aa)) is PABB component.

This sequence in the C-terminal section; belongs to the anthranilate synthase component I family.

It is found in the plastid. Its subcellular location is the chloroplast. It catalyses the reaction chorismate + L-glutamine = 4-amino-4-deoxychorismate + L-glutamate. It functions in the pathway cofactor biosynthesis; tetrahydrofolate biosynthesis; 4-aminobenzoate from chorismate: step 1/2. With respect to regulation, activated by chorismate and inhibited by dihydrofolate and methotrexate. Bifunctional enzyme that catalyzes the biosynthesis of 4-amino-4-deoxychorismate (ADC) from chorismate and glutamine. In the first step, a glutamine amidotransferase generates ammonia that is channelled between the binding sites of glutamine and chorismate and used along with chorismate in the second step, catalyzed by aminodeoxychorismate synthase, to produce ADC. Required for the synthesis of 4-aminobenzoate (PABA), an important component in tetrahydrofolate biosynthesis. Does not possess ADC lyase activity. In Arabidopsis thaliana (Mouse-ear cress), this protein is Aminodeoxychorismate synthase, chloroplastic (ADCS).